A 320-amino-acid chain; its full sequence is Lipoyl synthase (320 aa).

The tract at residues 1-26 (MVTVVDRVTSRRLRHPEKMHRPDTSI) is disordered. The [4Fe-4S] cluster site is built by Cys59, Cys64, Cys70, Cys85, Cys89, Cys92, and Ser298. The Radical SAM core domain occupies 71-287 (WSQRHASFMI…AKIGKVKGFL (217 aa)).

This sequence belongs to the radical SAM superfamily. Lipoyl synthase family. The cofactor is [4Fe-4S] cluster.

It is found in the cytoplasm. It catalyses the reaction [[Fe-S] cluster scaffold protein carrying a second [4Fe-4S](2+) cluster] + N(6)-octanoyl-L-lysyl-[protein] + 2 oxidized [2Fe-2S]-[ferredoxin] + 2 S-adenosyl-L-methionine + 4 H(+) = [[Fe-S] cluster scaffold protein] + N(6)-[(R)-dihydrolipoyl]-L-lysyl-[protein] + 4 Fe(3+) + 2 hydrogen sulfide + 2 5'-deoxyadenosine + 2 L-methionine + 2 reduced [2Fe-2S]-[ferredoxin]. The protein operates within protein modification; protein lipoylation via endogenous pathway; protein N(6)-(lipoyl)lysine from octanoyl-[acyl-carrier-protein]: step 2/2. Catalyzes the radical-mediated insertion of two sulfur atoms into the C-6 and C-8 positions of the octanoyl moiety bound to the lipoyl domains of lipoate-dependent enzymes, thereby converting the octanoylated domains into lipoylated derivatives. This is Lipoyl synthase from Bartonella quintana (strain Toulouse) (Rochalimaea quintana).